Consider the following 427-residue polypeptide: Phosphomethylpyrimidine synthase (427 aa).

Residues N66, M95, Y124, H163, 185 to 187 (SRG), 226 to 229 (DGLR), and E265 contribute to the substrate site. Position 269 (H269) interacts with Zn(2+). Residue Y292 participates in substrate binding. H333 contributes to the Zn(2+) binding site. Positions 409, 412, and 416 each coordinate [4Fe-4S] cluster.

The protein belongs to the ThiC family. Homodimer. [4Fe-4S] cluster serves as cofactor.

It catalyses the reaction 5-amino-1-(5-phospho-beta-D-ribosyl)imidazole + S-adenosyl-L-methionine = 4-amino-2-methyl-5-(phosphooxymethyl)pyrimidine + CO + 5'-deoxyadenosine + formate + L-methionine + 3 H(+). The protein operates within cofactor biosynthesis; thiamine diphosphate biosynthesis. Its function is as follows. Catalyzes the synthesis of the hydroxymethylpyrimidine phosphate (HMP-P) moiety of thiamine from aminoimidazole ribotide (AIR) in a radical S-adenosyl-L-methionine (SAM)-dependent reaction. This is Phosphomethylpyrimidine synthase from Syntrophus aciditrophicus (strain SB).